Here is a 59-residue protein sequence, read N- to C-terminus: Large ribosomal subunit protein bL32 (59 aa).

Basic residues predominate over residues 1-20 (MAVPKKKTSKGKRNQRHATW). The tract at residues 1-22 (MAVPKKKTSKGKRNQRHATWKG) is disordered.

The protein belongs to the bacterial ribosomal protein bL32 family.

This Prochlorococcus marinus (strain NATL1A) protein is Large ribosomal subunit protein bL32.